A 289-amino-acid polypeptide reads, in one-letter code: MTSNVSAITEASTSKFVRIKEGDGEVQLHYNDAGQGAETVVMLHGSGPGASGWANFNRNVEPLVAAGYRVILLDCLGWSKSDPVVCDGSRSELNARSLKGLLDALDIERVHIIGNSMGGHSAVAFALANPQRVGKLVLMGGGTGGPSQFVPMPTEGIKLLQGLYREPTIDNLKRMMNVFVFDASALTDDLMQARLDNMLARRDHLENFVKSLAANPKQFNDFGPRLGEIAAPTLVIWGRDDRFVPMDVGLRLVAGMQNAEMHIFSRCGHWAQWEHAEKFNRMVVDFLAH.

Positions 39–275 (TVVMLHGSGP…RCGHWAQWEH (237 aa)) constitute an AB hydrolase-1 domain. His269 (proton acceptor) is an active-site residue.

This sequence belongs to the AB hydrolase superfamily. MhpC family. In terms of assembly, homodimer.

The catalysed reaction is (2Z,4E)-2-hydroxy-6-oxonona-2,4-dienedioate + H2O = (2Z)-2-hydroxypenta-2,4-dienoate + succinate + H(+). It catalyses the reaction (2Z,4E,7E)-2-hydroxy-6-oxonona-2,4,7-trienedioate + H2O = (2Z)-2-hydroxypenta-2,4-dienoate + fumarate + H(+). The protein operates within aromatic compound metabolism; 3-phenylpropanoate degradation. In terms of biological role, catalyzes the cleavage of the C5-C6 bond of 2-hydroxy-6-oxononadienedioate and 2-hydroxy-6-oxononatrienedioate, a dienol ring fission product of the bacterial meta-cleavage pathway for degradation of phenylpropionic acid. The chain is 2-hydroxy-6-oxononadienedioate/2-hydroxy-6-oxononatrienedioate hydrolase from Paraburkholderia xenovorans (strain LB400).